Reading from the N-terminus, the 346-residue chain is Hexosaminidase D (346 aa).

Glu-141 (proton donor) is an active-site residue.

The protein belongs to the glycosyl hydrolase 20 family. In terms of assembly, homodimer; disulfide-linked.

It localises to the cytoplasm. It is found in the nucleus. The protein localises to the extracellular vesicle. The enzyme catalyses Hydrolysis of terminal non-reducing N-acetyl-D-hexosamine residues in N-acetyl-beta-D-hexosaminides.. Inhibited by O-(2-acetamido-2-deoxy-D-glucopyranosylidene)amino N-phenylcarbamate (PUGNAc). Inhibited by galacto-NAG-thiazoline. Functionally, has hexosaminidase activity. Responsible for the cleavage of the monosaccharides N-acetylglucosamine (GlcNAc) and N-acetylgalactosamine (GalNAc) from cellular substrates. Has a preference for galactosaminide over glucosaminide substrates. In Bos taurus (Bovine), this protein is Hexosaminidase D.